A 304-amino-acid chain; its full sequence is Serine protease 30 (304 aa).

The N-terminal stretch at 1 to 21 (MESWARCIFLLLLQILTGGRG) is a signal peptide. The propeptide at 22 to 30 (DILHSGAGK) is activation peptide. Positions 31–271 (IVGGQDAPEG…YVDWIQRTLA (241 aa)) constitute a Peptidase S1 domain. Cysteine 57 and cysteine 73 are oxidised to a cystine. The active-site Charge relay system is histidine 72. N-linked (GlcNAc...) asparagine glycosylation is present at asparagine 79. Aspartate 122 (charge relay system) is an active-site residue. 3 disulfides stabilise this stretch: cysteine 155–cysteine 229, cysteine 185–cysteine 208, and cysteine 219–cysteine 247. Serine 223 (charge relay system) is an active-site residue. N-linked (GlcNAc...) asparagine glycans are attached at residues asparagine 232 and asparagine 273. Serine 275 carries the GPI-anchor amidated serine lipid modification. A propeptide spans 276 to 304 (DAYGCRSRASGAYPALLLVLLAFALPESL) (removed in mature form).

The protein belongs to the peptidase S1 family. In terms of tissue distribution, expressed predominantly in kidney, small intestine and stomach and moderately in thymus, lung, spleen, testis and skin. In the kidney, expressed mainly in collecting duct of renal medulla and cortex.

Its subcellular location is the cell membrane. With respect to regulation, inhibited by aprotinin, leupeptin, benzamidine and soybean trypsin inhibitor. Partially inhibited by PMSF and DFP. Selectively cleaves synthetic peptide substrates of trypsin. Activates the epithelial sodium channel ENaC. The polypeptide is Serine protease 30 (Prss30) (Rattus norvegicus (Rat)).